Consider the following 301-residue polypeptide: Probable alpha-L-glutamate ligase (301 aa).

In terms of domain architecture, ATP-grasp spans 104-287; the sequence is MQLLSRKGIG…VAGLIIDFIE (184 aa). Residues Lys141, 178–179, Asp187, and 211–213 each bind ATP; these read EF and RSN. 3 residues coordinate Mg(2+): Asp248, Glu260, and Asn262. Residues Asp248, Glu260, and Asn262 each contribute to the Mn(2+) site.

It belongs to the RimK family. Requires Mg(2+) as cofactor. It depends on Mn(2+) as a cofactor.

This Aliivibrio fischeri (strain MJ11) (Vibrio fischeri) protein is Probable alpha-L-glutamate ligase.